The primary structure comprises 86 residues: Protein YwqI (86 aa).

The stretch at 57–83 (DYKKAVQKNIEDTKDNVDSLKEQDEAI) forms a coiled coil.

The chain is Protein YwqI (ywqI) from Bacillus subtilis (strain 168).